A 185-amino-acid chain; its full sequence is Ribosome-recycling factor (185 aa).

This sequence belongs to the RRF family.

It is found in the cytoplasm. Functionally, responsible for the release of ribosomes from messenger RNA at the termination of protein biosynthesis. May increase the efficiency of translation by recycling ribosomes from one round of translation to another. This is Ribosome-recycling factor from Geobacillus kaustophilus (strain HTA426).